A 639-amino-acid polypeptide reads, in one-letter code: MAPSSLLLSVGSLIASSLASATSLQIREQSQSYQLTESWQGESFINDWNFFDRGDPTNGYVTYVNQSVAESSGLVKVTQSGSFYMGVDYESKLNPDGPGRESVRIESKKYYTQGLYVVDIAHMPGSICGTWPAFWSVGANWPHDGEIDIIEGVNKHDANEIVLHTSGSCDVAGSHDMTGSLTSGECGDASGTIGCVVKGTQGSAGDPFNAQGGGVYAIEWTDSFLKIWFFPRNSIPASITAGKPDSSAFGTPMAHLQGTCDFAERFKEQKFILDTTFCGDWAGNVFGESGCPLSDASSPMRSCVDYVAQNPAAFKEAYWEINSIKIYQLGAAPAPATVASPNTASEVHSASELAPATQTEKPTVPTAAETTVVPPASQTSTVAEETPIAPLATAATVTAVNPAPPATQPTAEPATAVTVTDGGDSFRTIFLTSTTTICPEAQSSSSAAAHGGNKNAPVGAVPGQPSGADAVGNPNPSTTTEAVAETETSQPELTAGGISELPKSAPAPTASQPTSEFKPSDVPDVPKPSPEAEHPAPPAAAGSSIINTPSSSAIFGSSTAVGTFTSLARVSRPTGGATFVPTIATATGSPTVGEDGSSGSATASATLTAPTGILFTAGARKLSVGLSGLVGALAVAALA.

A signal peptide spans 1–21 (MAPSSLLLSVGSLIASSLASA). One can recognise a GH16 domain in the interval 26–290 (IREQSQSYQL…WAGNVFGESG (265 aa)). An N-linked (GlcNAc...) asparagine glycan is attached at N65. The active-site Nucleophile is the E146. The Proton donor role is filled by E151. Disordered regions lie at residues 337–384 (TVAS…TVAE) and 442–545 (QSSS…GSSI). Residues 339–348 (ASPNTASEVH) are compositionally biased toward polar residues. Composition is skewed to low complexity over residues 362–376 (PTVP…VPPA) and 478–488 (TTTEAVAETET). Residue A617 is the site of GPI-anchor amidated alanine attachment. A propeptide spans 618 to 639 (GARKLSVGLSGLVGALAVAALA) (removed in mature form).

This sequence belongs to the glycosyl hydrolase 16 family.

The protein resides in the cell membrane. The catalysed reaction is Endohydrolysis of (1-&gt;3)- or (1-&gt;4)-linkages in beta-D-glucans when the glucose residue whose reducing group is involved in the linkage to be hydrolyzed is itself substituted at C-3.. In terms of biological role, mixed-linked glucanase involved in the degradation of complex natural cellulosic substrates. This chain is Probable endo-1,3(4)-beta-glucanase ACLA_073210, found in Aspergillus clavatus (strain ATCC 1007 / CBS 513.65 / DSM 816 / NCTC 3887 / NRRL 1 / QM 1276 / 107).